Reading from the N-terminus, the 359-residue chain is MNIYDQLQAVEDRYEELGELLSDPDVVSDTKRFMELSREEASTRETVTAYREYKQVIQNISDAEEMIKDASGDAELEEMAKEELKESKAAKEEYEERLKILLLPKDPNDDKNIILEIRGAAGGDEAALFAGDLLTMYQKYAETQGWRFEVMESSVNGVGGIKEVVAMVSGQSVYSKLKYESGAHRVQRVPVTESQGRVHTSTATVLVMPEVEEVEYEIDQKDLRVDIYHASGAGGQNVNKVATAVRMVHIPTGIKVEMQEERTQQKNRDKAMKIIRARVADHFAQIAQDEQDAERKSTVGTGDRSERIRTYNFPQNRVTDHRIGLTLQKLDTILSGKMDEVIDALVMYDQTQKLEALNK.

An N5-methylglutamine modification is found at glutamine 236.

This sequence belongs to the prokaryotic/mitochondrial release factor family. Methylated by PrmC. Methylation increases the termination efficiency of RF1.

The protein localises to the cytoplasm. In terms of biological role, peptide chain release factor 1 directs the termination of translation in response to the peptide chain termination codons UAG and UAA. This Streptococcus agalactiae serotype V (strain ATCC BAA-611 / 2603 V/R) protein is Peptide chain release factor 1.